The sequence spans 464 residues: NADH-ubiquinone oxidoreductase chain 4 (464 aa).

The next 13 helical transmembrane spans lie at 18-38 (LLPTYGKGLILVASILVVLPT), 54-74 (IADIFILLTAYLLPLSIIANW), 79-99 (SLLYFELILNLGVILLINFMC), 102-122 (MLSFYVYFEISLAPLFILIGL), 131-151 (AADYILIYTLFSSLFMLLAIG), 168-188 (VVLSTDLQCILFLCISAGIMV), 207-227 (PLAGSMLLAGVILKLAVYAII), 239-259 (VLYTPVVYVICAITIIYTSII), 266-286 (LKVIVAYSSISHMAVCILGIL), 297-317 (LILSLAHGFVSPALFIIVGGI), 332-352 (GLLTYMPILAIYLLILSFSNI), 375-395 (TILGCISAFSVLLSAAYMLKV), and 420-440 (LLMIALIIPTLWYGLYPNGII).

It belongs to the complex I subunit 4 family.

The protein resides in the mitochondrion membrane. The catalysed reaction is a ubiquinone + NADH + 5 H(+)(in) = a ubiquinol + NAD(+) + 4 H(+)(out). Core subunit of the mitochondrial membrane respiratory chain NADH dehydrogenase (Complex I) that is believed to belong to the minimal assembly required for catalysis. Complex I functions in the transfer of electrons from NADH to the respiratory chain. The immediate electron acceptor for the enzyme is believed to be ubiquinone. The polypeptide is NADH-ubiquinone oxidoreductase chain 4 (NAD4) (Candida albicans (strain SC5314 / ATCC MYA-2876) (Yeast)).